The chain runs to 839 residues: Phosphatidylinositol-glycan-specific phospholipase D (839 aa).

A signal peptide spans 1–23 (MSAFRFWSGLLMLLGFLCPRSSP). Residues asparagine 94, asparagine 271, asparagine 292, asparagine 307, and asparagine 321 are each glycosylated (N-linked (GlcNAc...) asparagine). FG-GAP repeat units lie at residues 365–427 (SSPA…GLPR), 434–496 (KEAH…GQLS), 498–558 (SPNV…YSSR), 562–622 (NVEA…SPGR), 632–692 (QSWF…GSTR), 703–769 (SLLS…TVGD), and 787–839 (QYVL…LGQD). N-linked (GlcNAc...) asparagine glycans are attached at residues asparagine 500, asparagine 590, and asparagine 658.

The protein belongs to the GPLD1 family. As to quaternary structure, monomer. Post-translationally, glycosylated.

It is found in the secreted. The enzyme catalyses a 6-(alpha-D-glucosaminyl)-1-(1,2-diacyl-sn-glycero-3-phospho)-1D-myo-inositol + H2O = 6-(alpha-D-glucosaminyl)-1D-myo-inositol + a 1,2-diacyl-sn-glycero-3-phosphate + H(+). Functionally, this protein hydrolyzes the inositol phosphate linkage in proteins anchored by phosphatidylinositol glycans (GPI-anchor) thus releasing these proteins from the membrane. The chain is Phosphatidylinositol-glycan-specific phospholipase D (GPLD1) from Bos taurus (Bovine).